A 535-amino-acid polypeptide reads, in one-letter code: Flavin-containing monooxygenase 1 (535 aa).

The residue at position 2 (Ala2) is an N-acetylalanine. At 2-513 (AKRVAIVGAG…TRIVQESSSP (512 aa)) the chain is on the lumenal side. FAD is bound by residues 9 to 13 (GAGVS), Glu32, 40 to 41 (LW), and 61 to 62 (NS). Residues 60–61 (SN) and 195–198 (SGTD) each bind NADP(+). The chain crosses the membrane as a helical span at residues 514-534 (FESLLKLFAVLALLVSVFLIF). Leu535 is a topological domain (cytoplasmic).

It belongs to the FMO family. FAD is required as a cofactor. As to expression, liver.

It is found in the endoplasmic reticulum membrane. The catalysed reaction is hypotaurine + NADPH + O2 + H(+) = taurine + NADP(+) + H2O. It carries out the reaction hypotaurine + NADH + O2 + H(+) = taurine + NAD(+) + H2O. The enzyme catalyses trimethylamine + NADPH + O2 = trimethylamine N-oxide + NADP(+) + H2O. It catalyses the reaction N,N-dimethylaniline + NADPH + O2 + H(+) = N,N-dimethylaniline N-oxide + NADP(+) + H2O. Functionally, broad spectrum monooxygenase that catalyzes the oxygenation of a wide variety of nitrogen- and sulfur-containing compounds including xenobiotics. Catalyzes the S-oxygenation of hypotaurine to produce taurine, an organic osmolyte involved in cell volume regulation as well as a variety of cytoprotective and developmental processes. In vitro, catalyzes the N-oxygenation of trimethylamine (TMA) to produce trimethylamine N-oxide (TMAO) and could therefore participate to the detoxification of this compound that is generated by the action of gut microbiota from dietary precursors such as choline, choline containing compounds, betaine or L-carnitine. The polypeptide is Flavin-containing monooxygenase 1 (FMO1) (Oryctolagus cuniculus (Rabbit)).